The following is a 1153-amino-acid chain: uncharacterized protein (1153 aa).

Positions 1-18 (MNKNIFITLLISLLLLSG) are cleaved as a signal peptide. Residue Cys-19 is the site of N-palmitoyl cysteine attachment. Cys-19 is lipidated: S-diacylglycerol cysteine. Transmembrane regions (helical) follow at residues 289–309 (VSAILTLYIMFTGFSFLIGNI), 393–413 (LGFIYIILYLIALYFIFFLIF), 422–442 (ALITIGMIIIMGPIFICFMLF), and 457–477 (ISYALQPIILFTGIAFISMII).

The protein belongs to the TrbL/VirB6 family.

The protein localises to the cell membrane. This is an uncharacterized protein from Rickettsia conorii (strain ATCC VR-613 / Malish 7).